The following is a 123-amino-acid chain: uncharacterized protein (123 aa).

This is an uncharacterized protein from Schizosaccharomyces pombe (strain 972 / ATCC 24843) (Fission yeast).